The chain runs to 326 residues: MTVCSSRLAGFGHAVPDRRVENAEIEAQLGLETGWIERRTGIRCRRWAMPDETLSHLAASAADMALSDAGIERSDIALTLLATSTPDHLLPPTAPLLTHWLNLQNSGAADLAGACTGFLYALVLADGFVRAQGKPVLVVAANLLSRRINMAERASAVLFGDAAGAVVLAPSAKANSFQSQFITNGSHYDLIKVPAGGSARAYAPERDASEFLMTMQDGRAVFTEAVRIMSGASQNVLASAAMLPQAIDRFFPHQANIRIVDKVCETIGVPRAKAASTLETYGNSSAATIPLSLSLANLEQPLREGERLLFAAAGAGMTGGAVLMQV.

Active-site residues include cysteine 115 and histidine 253. An ACP-binding region spans residues 254–258; the sequence is QANIR. The active site involves asparagine 283.

It belongs to the thiolase-like superfamily. BioZ family.

The catalysed reaction is malonyl-[ACP] + an acyl-CoA + H(+) = a 3-oxoacyl-[ACP] + CO2 + CoA. It carries out the reaction glutaryl-CoA + malonyl-[ACP] + H(+) = 3-oxo-6-carboxyhexanoyl-[ACP] + CO2 + CoA. It participates in cofactor biosynthesis; biotin biosynthesis. Functionally, involved in the formation of the biotin precursor pimeloyl-ACP. Catalyzes the condensation of glutaryl-CoA, an intermediate in lysine degradation, with malonyl-ACP to produce 3-oxopimeloyl-ACP. This chain is 3-oxopimeloyl-[acyl-carrier-protein] synthase, found in Brucella abortus (strain 2308).